A 162-amino-acid chain; its full sequence is Succinate dehydrogenase assembly factor 2-A, mitochondrial (162 aa).

Residues 1–23 (MLRQLRLTMDISGWIFLPWRRSM) constitute a mitochondrion transit peptide.

It belongs to the SDHAF2 family. Interacts with the flavoprotein subunit within the SDH catalytic dimer.

Its subcellular location is the mitochondrion matrix. In terms of biological role, plays an essential role in the assembly of succinate dehydrogenase (SDH), an enzyme complex (also referred to as respiratory complex II) that is a component of both the tricarboxylic acid (TCA) cycle and the mitochondrial electron transport chain, and which couples the oxidation of succinate to fumarate with the reduction of ubiquinone (coenzyme Q) to ubiquinol. Required for flavinylation (covalent attachment of FAD) of the flavoprotein subunit of the SDH catalytic dimer. In Drosophila erecta (Fruit fly), this protein is Succinate dehydrogenase assembly factor 2-A, mitochondrial.